The sequence spans 327 residues: N-acetylmuramoyl-L-alanine amidase sle1 (327 aa).

A signal peptide spans 1–25; it reads MRKKIIATVIGTSALAAVTWTNADA. LysM domains follow at residues 27–70, 86–129, and 150–193; these read TTYK…SLKV, STYT…KLKV, and TTYT…KLKV. Residues 68–89 are disordered; sequence LKVSGSTSSSTSSNTSTGSTYT. Over residues 71–87 the composition is skewed to low complexity; that stretch reads SGSTSSSTSSNTSTGST. Positions 203-327 constitute a Peptidase C51 domain; the sequence is GSSSTGSAGY…SQVSSYVYIH (125 aa).

It is found in the secreted. It localises to the cell surface. It catalyses the reaction Hydrolyzes the link between N-acetylmuramoyl residues and L-amino acid residues in certain cell-wall glycopeptides.. Peptidoglycan hydrolase involved in the splitting of the septum during cell division. The protein is N-acetylmuramoyl-L-alanine amidase sle1 (sle1) of Staphylococcus saprophyticus subsp. saprophyticus (strain ATCC 15305 / DSM 20229 / NCIMB 8711 / NCTC 7292 / S-41).